Consider the following 482-residue polypeptide: ATP synthase subunit beta (482 aa).

162-169 lines the ATP pocket; that stretch reads GGAGVGKT.

It belongs to the ATPase alpha/beta chains family. In terms of assembly, F-type ATPases have 2 components, CF(1) - the catalytic core - and CF(0) - the membrane proton channel. CF(1) has five subunits: alpha(3), beta(3), gamma(1), delta(1), epsilon(1). CF(0) has four main subunits: a(1), b(1), b'(1) and c(9-12).

The protein resides in the cellular thylakoid membrane. The enzyme catalyses ATP + H2O + 4 H(+)(in) = ADP + phosphate + 5 H(+)(out). Its function is as follows. Produces ATP from ADP in the presence of a proton gradient across the membrane. The catalytic sites are hosted primarily by the beta subunits. In Synechococcus sp. (strain PCC 6716), this protein is ATP synthase subunit beta.